The following is a 448-amino-acid chain: MRFRERQSLHLISLGCTKNLVDSEVMLGRLQSYTLTQELENADVIIINTCGFIESAKQESIQTIFHASSNRKRGALLVVSGCLAERYTKELKEEIPEIDIITGVSDYDKIDSMIAQRRSIESAKVFLADEHNERVIIGSSFHAYIKLSEGCNQACSFCAIPQFKGKLHSRTLQSTLKELTNLYNQGFRDFSFIAQDSSSYMRDLGQKDGLMQLIRAVDNLNLPISARILYLYPSSTSLQLIESIAQSKSFLPYFDMPIQHIADAMLKTMRRGADKATHLELLNAMRAVPHNFVRTSFIIGHPNEDEKAFLELHDFIESFAFDRINLFAYSPQEGTAADSMPNRPNTKITNQRINTLNKIIQSQYKAHNLALVGQEVDAILEGKSEVSEYFYKARLKLWGKDIDGEILINDSEIVDSNNQMLLLKEGYYRVQITQCKDNFLFGKALSHL.

Residues glutamine 7 to serine 119 form the MTTase N-terminal domain. Cysteine 16, cysteine 50, cysteine 82, cysteine 151, cysteine 155, and cysteine 158 together coordinate [4Fe-4S] cluster. In terms of domain architecture, Radical SAM core spans isoleucine 137–alanine 366.

The protein belongs to the methylthiotransferase family. RimO subfamily. Requires [4Fe-4S] cluster as cofactor.

Its subcellular location is the cytoplasm. It catalyses the reaction L-aspartate(89)-[ribosomal protein uS12]-hydrogen + (sulfur carrier)-SH + AH2 + 2 S-adenosyl-L-methionine = 3-methylsulfanyl-L-aspartate(89)-[ribosomal protein uS12]-hydrogen + (sulfur carrier)-H + 5'-deoxyadenosine + L-methionine + A + S-adenosyl-L-homocysteine + 2 H(+). In terms of biological role, catalyzes the methylthiolation of an aspartic acid residue of ribosomal protein uS12. The polypeptide is Ribosomal protein uS12 methylthiotransferase RimO (Helicobacter hepaticus (strain ATCC 51449 / 3B1)).